Here is a 547-residue protein sequence, read N- to C-terminus: CDK5RAP1-like protein (547 aa).

In terms of domain architecture, MTTase N-terminal spans 79 to 194 (RTVCYVTYGC…LPRLVAVAAG (116 aa)). Residues Cys-88, Cys-124, Cys-157, Cys-232, Cys-236, and Cys-239 each coordinate [4Fe-4S] cluster. In terms of domain architecture, Radical SAM core spans 218–475 (DSASKTAFIS…TTVFREEALK (258 aa)). The TRAM domain maps to 478–543 (QALIGSEQTV…SQTLKAQLIG (66 aa)).

This sequence belongs to the methylthiotransferase family. MiaB subfamily. [4Fe-4S] cluster is required as a cofactor.

Its function is as follows. Potential regulator of CDK5 activity. This chain is CDK5RAP1-like protein, found in Caenorhabditis elegans.